The following is a 296-amino-acid chain: Probable GTP 3',8-cyclase (296 aa).

The 226-residue stretch at 5-230 (EYGRVVTNLR…HRRTQYFTPK (226 aa)) folds into the Radical SAM core domain. R14 provides a ligand contact to GTP. [4Fe-4S] cluster is bound by residues C21 and C25. Residue Y27 coordinates S-adenosyl-L-methionine. Residue C28 coordinates [4Fe-4S] cluster. K61 is a binding site for GTP. G65 provides a ligand contact to S-adenosyl-L-methionine. T89 contributes to the GTP binding site. S113 contributes to the S-adenosyl-L-methionine binding site. K150 provides a ligand contact to GTP. Positions 245 and 248 each coordinate [4Fe-4S] cluster. 250 to 252 (RMR) is a GTP binding site. Residue C262 participates in [4Fe-4S] cluster binding.

Belongs to the radical SAM superfamily. MoaA family. It depends on [4Fe-4S] cluster as a cofactor.

The enzyme catalyses GTP + AH2 + S-adenosyl-L-methionine = (8S)-3',8-cyclo-7,8-dihydroguanosine 5'-triphosphate + 5'-deoxyadenosine + L-methionine + A + H(+). Its pathway is cofactor biosynthesis; molybdopterin biosynthesis. Catalyzes the cyclization of GTP to (8S)-3',8-cyclo-7,8-dihydroguanosine 5'-triphosphate. The chain is Probable GTP 3',8-cyclase from Archaeoglobus fulgidus (strain ATCC 49558 / DSM 4304 / JCM 9628 / NBRC 100126 / VC-16).